Reading from the N-terminus, the 119-residue chain is Nucleoid-associated protein Cphy_0047 (119 aa).

The tract at residues 23 to 45 (AQRMQKQMEDKTKEMEEKQWEAT) is disordered. Residues 28 to 42 (KQMEDKTKEMEEKQW) are compositionally biased toward basic and acidic residues.

Belongs to the YbaB/EbfC family. Homodimer.

The protein resides in the cytoplasm. Its subcellular location is the nucleoid. Its function is as follows. Binds to DNA and alters its conformation. May be involved in regulation of gene expression, nucleoid organization and DNA protection. This is Nucleoid-associated protein Cphy_0047 from Lachnoclostridium phytofermentans (strain ATCC 700394 / DSM 18823 / ISDg) (Clostridium phytofermentans).